Here is a 519-residue protein sequence, read N- to C-terminus: NADH-quinone oxidoreductase subunit C/D (519 aa).

An NADH dehydrogenase I subunit C region spans residues 1 to 138 (MSERIEIPAE…TNEEPVDTTQ (138 aa)). The interval 159–519 (DEYIINIGPQ…VDYVVPDIDR (361 aa)) is NADH dehydrogenase I subunit D.

The protein in the N-terminal section; belongs to the complex I 30 kDa subunit family. In the C-terminal section; belongs to the complex I 49 kDa subunit family. NDH-1 is composed of 13 different subunits. Subunits NuoB, CD, E, F, and G constitute the peripheral sector of the complex.

The protein resides in the cell inner membrane. The catalysed reaction is a quinone + NADH + 5 H(+)(in) = a quinol + NAD(+) + 4 H(+)(out). Its function is as follows. NDH-1 shuttles electrons from NADH, via FMN and iron-sulfur (Fe-S) centers, to quinones in the respiratory chain. The immediate electron acceptor for the enzyme in this species is believed to be a menaquinone. Couples the redox reaction to proton translocation (for every two electrons transferred, four hydrogen ions are translocated across the cytoplasmic membrane), and thus conserves the redox energy in a proton gradient. In Phocaeicola vulgatus (strain ATCC 8482 / DSM 1447 / JCM 5826 / CCUG 4940 / NBRC 14291 / NCTC 11154) (Bacteroides vulgatus), this protein is NADH-quinone oxidoreductase subunit C/D.